Here is a 251-residue protein sequence, read N- to C-terminus: 5'-nucleotidase SurE (251 aa).

D8, D9, S39, and N95 together coordinate a divalent metal cation.

It belongs to the SurE nucleotidase family. It depends on a divalent metal cation as a cofactor.

The protein resides in the cytoplasm. The enzyme catalyses a ribonucleoside 5'-phosphate + H2O = a ribonucleoside + phosphate. Nucleotidase that shows phosphatase activity on nucleoside 5'-monophosphates. This is 5'-nucleotidase SurE from Ralstonia pickettii (strain 12J).